Consider the following 347-residue polypeptide: Putative phosphoesterase 078R (347 aa).

The a divalent metal cation site is built by D52, N87, and H211.

This sequence belongs to the metallophosphoesterase superfamily. IIV-6 244L family.

The protein is Putative phosphoesterase 078R of Invertebrate iridescent virus 3 (IIV-3).